Reading from the N-terminus, the 417-residue chain is Serine hydroxymethyltransferase 1 (417 aa).

(6S)-5,6,7,8-tetrahydrofolate-binding positions include leucine 121 and 125-127 (GHL). N6-(pyridoxal phosphate)lysine is present on lysine 229. Residue 354–356 (SPF) participates in (6S)-5,6,7,8-tetrahydrofolate binding.

It belongs to the SHMT family. As to quaternary structure, homodimer. It depends on pyridoxal 5'-phosphate as a cofactor.

The protein localises to the cytoplasm. It carries out the reaction (6R)-5,10-methylene-5,6,7,8-tetrahydrofolate + glycine + H2O = (6S)-5,6,7,8-tetrahydrofolate + L-serine. It functions in the pathway one-carbon metabolism; tetrahydrofolate interconversion. It participates in amino-acid biosynthesis; glycine biosynthesis; glycine from L-serine: step 1/1. In terms of biological role, catalyzes the reversible interconversion of serine and glycine with tetrahydrofolate (THF) serving as the one-carbon carrier. This reaction serves as the major source of one-carbon groups required for the biosynthesis of purines, thymidylate, methionine, and other important biomolecules. Also exhibits THF-independent aldolase activity toward beta-hydroxyamino acids, producing glycine and aldehydes, via a retro-aldol mechanism. This Pseudomonas savastanoi pv. phaseolicola (strain 1448A / Race 6) (Pseudomonas syringae pv. phaseolicola (strain 1448A / Race 6)) protein is Serine hydroxymethyltransferase 1.